Here is a 460-residue protein sequence, read N- to C-terminus: Cysteine--tRNA ligase (460 aa).

Position 28 (cysteine 28) interacts with Zn(2+). The 'HIGH' region signature appears at 30-40 (MTVYDYCHLGH). 3 residues coordinate Zn(2+): cysteine 209, histidine 234, and glutamate 238. The 'KMSKS' region motif lies at 266–270 (KMSKS). Residue lysine 269 coordinates ATP.

It belongs to the class-I aminoacyl-tRNA synthetase family. Monomer. Zn(2+) is required as a cofactor.

The protein resides in the cytoplasm. The enzyme catalyses tRNA(Cys) + L-cysteine + ATP = L-cysteinyl-tRNA(Cys) + AMP + diphosphate. This is Cysteine--tRNA ligase from Thioalkalivibrio sulfidiphilus (strain HL-EbGR7).